A 497-amino-acid chain; its full sequence is Aldehyde dehydrogenase (497 aa).

241–246 (GSTLVG) lines the NAD(+) pocket. Glu-264 serves as the catalytic Proton acceptor. Cys-298 acts as the Nucleophile in catalysis.

It belongs to the aldehyde dehydrogenase family.

The enzyme catalyses an aldehyde + NAD(+) + H2O = a carboxylate + NADH + 2 H(+). It participates in alcohol metabolism; ethanol degradation; acetate from ethanol: step 2/2. This Emericella nidulans (strain FGSC A4 / ATCC 38163 / CBS 112.46 / NRRL 194 / M139) (Aspergillus nidulans) protein is Aldehyde dehydrogenase (aldA).